The following is a 336-amino-acid chain: 4-hydroxy-3-methylbut-2-enyl diphosphate reductase (336 aa).

C37 contacts [4Fe-4S] cluster. (2E)-4-hydroxy-3-methylbut-2-enyl diphosphate-binding residues include H66 and H99. Residues H66 and H99 each coordinate dimethylallyl diphosphate. Isopentenyl diphosphate contacts are provided by H66 and H99. Position 121 (C121) interacts with [4Fe-4S] cluster. A (2E)-4-hydroxy-3-methylbut-2-enyl diphosphate-binding site is contributed by H149. Position 149 (H149) interacts with dimethylallyl diphosphate. H149 provides a ligand contact to isopentenyl diphosphate. The active-site Proton donor is E151. T189 provides a ligand contact to (2E)-4-hydroxy-3-methylbut-2-enyl diphosphate. C219 serves as a coordination point for [4Fe-4S] cluster. (2E)-4-hydroxy-3-methylbut-2-enyl diphosphate-binding residues include S247, S248, N249, and S292. Residues S247, S248, N249, and S292 each coordinate dimethylallyl diphosphate. Isopentenyl diphosphate-binding residues include S247, S248, N249, and S292.

This sequence belongs to the IspH family. [4Fe-4S] cluster is required as a cofactor.

It catalyses the reaction isopentenyl diphosphate + 2 oxidized [2Fe-2S]-[ferredoxin] + H2O = (2E)-4-hydroxy-3-methylbut-2-enyl diphosphate + 2 reduced [2Fe-2S]-[ferredoxin] + 2 H(+). It carries out the reaction dimethylallyl diphosphate + 2 oxidized [2Fe-2S]-[ferredoxin] + H2O = (2E)-4-hydroxy-3-methylbut-2-enyl diphosphate + 2 reduced [2Fe-2S]-[ferredoxin] + 2 H(+). It functions in the pathway isoprenoid biosynthesis; dimethylallyl diphosphate biosynthesis; dimethylallyl diphosphate from (2E)-4-hydroxy-3-methylbutenyl diphosphate: step 1/1. It participates in isoprenoid biosynthesis; isopentenyl diphosphate biosynthesis via DXP pathway; isopentenyl diphosphate from 1-deoxy-D-xylulose 5-phosphate: step 6/6. Its function is as follows. Catalyzes the conversion of 1-hydroxy-2-methyl-2-(E)-butenyl 4-diphosphate (HMBPP) into a mixture of isopentenyl diphosphate (IPP) and dimethylallyl diphosphate (DMAPP). Acts in the terminal step of the DOXP/MEP pathway for isoprenoid precursor biosynthesis. The chain is 4-hydroxy-3-methylbut-2-enyl diphosphate reductase from Rhodococcus jostii (strain RHA1).